A 618-amino-acid chain; its full sequence is Grainyhead-like protein 1 homolog (618 aa).

The tract at residues 1–91 (MTQEYDNKRP…EVEHPEPDHS (91 aa)) is transcription activation. Basic and acidic residues predominate over residues 74 to 92 (RRSSTAKPEVEHPEPDHSK). The tract at residues 74 to 94 (RRSSTAKPEVEHPEPDHSKRN) is disordered. Thr-208 carries the phosphothreonine modification. The region spanning 248 to 474 (SGNNFEYTLE…DLDTQPVLFI (227 aa)) is the Grh/CP2 DB domain. 2 interaction with DNA regions span residues 380-389 (TDFSSQKGVK) and 427-430 (RKIR).

It belongs to the grh/CP2 family. Grainyhead subfamily. As to quaternary structure, binds DNA as homodimer. Homodimer, also forms heterodimers with GRHL2 or GRHL3. Post-translationally, methylation at Arg-9 and Lys-116 may be involved in regulating transcriptional activation.

It is found in the nucleus. In terms of biological role, transcription factor involved in epithelial development. Binds directly to the consensus DNA sequence 5'-AACCGGTT-3'. Important regulator of DSG1 in the context of hair anchorage and epidermal differentiation, participates in the maintenance of the skin barrier. There is no genetic interaction with GRHL3, nor functional cooperativity due to diverse target gene selectivity during epithelia development. May play a role in regulating glucose homeostasis and insulin signaling. The protein is Grainyhead-like protein 1 homolog (GRHL1) of Pongo abelii (Sumatran orangutan).